The chain runs to 286 residues: Polyamine aminopropyltransferase (286 aa).

One can recognise a PABS domain in the interval 9-242 (NGWIDEHHQG…GWWSWTFAAI (234 aa)). Q36 lines the S-methyl-5'-thioadenosine pocket. Spermidine contacts are provided by H67 and D91. Residues E111 and 143–144 (NG) each bind S-methyl-5'-thioadenosine. The Proton acceptor role is filled by D162. P169 contacts S-methyl-5'-thioadenosine.

This sequence belongs to the spermidine/spermine synthase family. Homodimer or homotetramer.

The protein localises to the cytoplasm. The enzyme catalyses S-adenosyl 3-(methylsulfanyl)propylamine + putrescine = S-methyl-5'-thioadenosine + spermidine + H(+). It functions in the pathway amine and polyamine biosynthesis; spermidine biosynthesis; spermidine from putrescine: step 1/1. Functionally, catalyzes the irreversible transfer of a propylamine group from the amino donor S-adenosylmethioninamine (decarboxy-AdoMet) to putrescine (1,4-diaminobutane) to yield spermidine. This Prochlorococcus marinus (strain MIT 9313) protein is Polyamine aminopropyltransferase.